Here is a 258-residue protein sequence, read N- to C-terminus: Glucosamine-6-phosphate deaminase (258 aa).

Residue Asp65 is the Proton acceptor; for enolization step of the active site. Asp134 (for ring-opening step) is an active-site residue. The active-site Proton acceptor; for ring-opening step is His136. The active-site For ring-opening step is Glu141.

The protein belongs to the glucosamine/galactosamine-6-phosphate isomerase family. NagB subfamily.

It catalyses the reaction alpha-D-glucosamine 6-phosphate + H2O = beta-D-fructose 6-phosphate + NH4(+). It participates in amino-sugar metabolism; N-acetylneuraminate degradation; D-fructose 6-phosphate from N-acetylneuraminate: step 5/5. Functionally, catalyzes the reversible isomerization-deamination of glucosamine 6-phosphate (GlcN6P) to form fructose 6-phosphate (Fru6P) and ammonium ion. The polypeptide is Glucosamine-6-phosphate deaminase (Corynebacterium kroppenstedtii (strain DSM 44385 / JCM 11950 / CIP 105744 / CCUG 35717)).